A 1166-amino-acid chain; its full sequence is Poly [ADP-ribose] polymerase tankyrase-2 (1166 aa).

3 ANK repeats span residues 57–89 (RKSTPLHFAAGFGRKDVVEYLLQNGANVQARDD), 90–122 (GGLIPLHNACSFGHAEVVNLLLRHGADPNARDN), and 123–155 (WNYTPLHEAAIKGKIDVCIVLLQHGAEPTIRNT). Asn203 carries the (3S)-3-hydroxyasparagine; by HIF1AN; partial modification. ANK repeat units lie at residues 210–242 (RKSTPLHLAAGYNRVKIVQLLLQHGADVHAKDK), 243–275 (GDLVPLHNACSYGHYEVTELLVKHGACVNAMDL), 276–308 (WQFTPLHEAASKNRVEVCSLLLSYGADPTLLNC), 363–398 (THETALHCAAASPYPKRKQICELLLRKGANINEKTK), 399–431 (EFLTPLHVASEKAHNDVVEVVVKHEAKVNALDN), and 432–464 (LGQTSLHRAAYCGHLQTCRLLLSYGCDPNIISL). Position 238 is a (3S)-3-hydroxyhistidine; by HIF1AN; partial (His238). (3S)-3-hydroxyasparagine; by HIF1AN; partial is present on Asn271. Asn427 bears the (3S)-3-hydroxyasparagine; by HIF1AN; partial mark. Position 518 is a (3S)-3-hydroxyasparagine; by HIF1AN; partial (Asn518). ANK repeat units lie at residues 525 to 557 (RQSTPLHFAAGYNRVSVVEYLLQHGADVHAKDK), 558 to 590 (GGLVPLHNACSYGHYEVAELLVKHGAVVNVADL), and 591 to 623 (WKFTPLHEAAAKGKYEICKLLLQHGADPTKKNR). The tract at residues 545–553 (LLQHGADVH) is HIF1AN-binding. His553 carries the (3S)-3-hydroxyhistidine; by HIF1AN; partial modification. Asn586 is modified ((3S)-3-hydroxyasparagine; by HIF1AN; partial). 3 positions are modified to (3S)-3-hydroxyasparagine; by HIF1AN; partial: Asn671, Asn706, and Asn739. ANK repeat units follow at residues 678 to 710 (RHSTPLHLAAGYNNLEVAEYLLQHGADVNAQDK), 711 to 743 (GGLIPLHNAASYGHVDVAALLIKYNACVNATDK), and 744 to 776 (WAFTPLHEAAQKGRTQLCALLLAHGADPTLKNQ). The interval 819–839 (GATADALSSGPSSPSSLSAAS) is disordered. A compositionally biased stretch (low complexity) spans 822 to 839 (ADALSSGPSSPSSLSAAS). Residues 873-936 (GVDFSITQFV…IKGVERLISG (64 aa)) enclose the SAM domain. Residues 959 to 1164 (SPDDKEFQSV…YQIMRPEGMV (206 aa)) form the PARP catalytic domain. Zn(2+) contacts are provided by Cys1081, His1084, Cys1089, and Cys1092.

This sequence belongs to the ARTD/PARP family. As to quaternary structure, oligomerizes and associates with TNKS. Interacts with the cytoplasmic domain of LNPEP/Otase in SLC2A4/GLUT4-vesicles. Binds to the N-terminus of Grb14 and TRF1 with its ankyrin repeat region. Interacts with HIF1AN. Interacts with RNF146; this interaction leads to ubiquitination and proteasomal degradation. Interacts with NUMA1. Post-translationally, ubiquitinated at 'Lys-48' and 'Lys-63' by RNF146 when auto-poly-ADP-ribosylated; this leads to degradation. Deubiquitinated by USP25; leading to stabilization. ADP-ribosylated (-auto). Poly-ADP-ribosylated protein is recognized by RNF146, followed by ubiquitination. In terms of processing, the crystallographic evidence suggests that the 3-hydroxyhistidine may be the (3S) stereoisomer. As to expression, highly expressed in placenta, skeletal muscle, liver, brain, kidney, heart, thymus, spinal cord, lung, peripheral blood leukocytes, pancreas, lymph nodes, spleen, prostate, testis, ovary, small intestine, colon, mammary gland, breast and breast carcinoma, and in common-type meningioma. Highly expressed in fetal liver, heart and brain.

The protein localises to the cytoplasm. Its subcellular location is the golgi apparatus membrane. The protein resides in the nucleus. It is found in the chromosome. It localises to the telomere. The enzyme catalyses NAD(+) + (ADP-D-ribosyl)n-acceptor = nicotinamide + (ADP-D-ribosyl)n+1-acceptor + H(+).. It catalyses the reaction L-aspartyl-[protein] + NAD(+) = 4-O-(ADP-D-ribosyl)-L-aspartyl-[protein] + nicotinamide. The catalysed reaction is L-glutamyl-[protein] + NAD(+) = 5-O-(ADP-D-ribosyl)-L-glutamyl-[protein] + nicotinamide. With respect to regulation, specifically inhibited by XAV939, a small molecule, leading to inhibit the Wnt signaling pathway by stabilizing AXIN1 and AXIN2. Inhibited by talazoparib. In terms of biological role, poly-ADP-ribosyltransferase involved in various processes such as Wnt signaling pathway, telomere length and vesicle trafficking. Acts as an activator of the Wnt signaling pathway by mediating poly-ADP-ribosylation of AXIN1 and AXIN2, 2 key components of the beta-catenin destruction complex: poly-ADP-ribosylated target proteins are recognized by RNF146, which mediates their ubiquitination and subsequent degradation. Also mediates poly-ADP-ribosylation of BLZF1 and CASC3, followed by recruitment of RNF146 and subsequent ubiquitination. Mediates poly-ADP-ribosylation of TERF1, thereby contributing to the regulation of telomere length. Stimulates 26S proteasome activity. The polypeptide is Poly [ADP-ribose] polymerase tankyrase-2 (Homo sapiens (Human)).